The primary structure comprises 323 residues: Mortality factor 4-like protein 1 (323 aa).

The Tudor-knot domain maps to 12–62 (QEGERVLCFHGPLLYEAKCVKVAIKDKQVKYFIHHSGWNKNWDEWVPESRV). Residues 76-143 (LQKANQEQYA…RKKRARVDPT (68 aa)) are disordered. The sufficient for interaction with SIN3A stretch occupies residues 94 to 227 (PGKKTSGLQQ…VAGIKEYFNV (134 aa)). The Nuclear localization signal signature appears at 96–107 (KKTSGLQQKNVD). Lys-104 is modified (N6-acetyllysine). Residues 125 to 191 (STSETPQPPR…FYLPAKKNVD (67 aa)) are interaction with RB1-1. Residues 149–303 (TFMNRVEVKV…FLKYLAKNSA (155 aa)) are sufficient for interaction with PHF12. Residues 152-323 (NRVEVKVKIP…APPEYHRKAV (172 aa)) enclose the MRG domain. The tract at residues 284 to 305 (LALLLNYLHDFLKYLAKNSATL) is interaction with RB1-2.

Component of the NuA4 histone acetyltransferase complex which contains the catalytic subunit KAT5/TIP60 and the subunits EP400, TRRAP/PAF400, BRD8/SMAP, EPC1, DMAP1/DNMAP1, RUVBL1/TIP49, RUVBL2, ING3, actin, ACTL6A/BAF53A, MORF4L1/MRG15, MORF4L2/MRGX, MRGBP, YEATS4/GAS41, VPS72/YL1 and MEAF6. The NuA4 complex interacts with MYC and the adenovirus E1A protein. MORF4L1 may also participate in the formation of NuA4 related complexes which lack the KAT5/TIP60 catalytic subunit, but which include the SWI/SNF related protein SRCAP. Component of the mSin3A histone deacetylase complex, which includes SIN3A, HDAC2, ARID4B, MORF4L1, RBBP4/RbAp48, and RBBP7/RbAp46. May also interact with PHF12 and one or more as yet undefined members of the TLE (transducin-like enhancer of split) family of transcriptional repressors. Component of the SIN3B complex, which includes SIN3B, HDAC2 or HDAC1, PHF12 and MORF4L1. Interacts with RB1 and KAT8. Interacts with the N-terminus of MRFAP1. Found in a complex composed of MORF4L1, MRFAP1 and RB1. Interacts with the entire BRCA complex, which contains BRCA1, PALB2, BRCA2 and RAD51. Interacts with PALB2. Forms a complex with MSL1 and NUPR1.

It is found in the nucleus. Its function is as follows. Component of the NuA4 histone acetyltransferase (HAT) complex which is involved in transcriptional activation of select genes principally by acetylation of nucleosomal histones H4 and H2A. This modification may both alter nucleosome - DNA interactions and promote interaction of the modified histones with other proteins which positively regulate transcription. This complex may be required for the activation of transcriptional programs associated with oncogene and proto-oncogene mediated growth induction, tumor suppressor mediated growth arrest and replicative senescence, apoptosis, and DNA repair. The NuA4 complex ATPase and helicase activities seem to be, at least in part, contributed by the association of RUVBL1 and RUVBL2 with EP400. NuA4 may also play a direct role in DNA repair when directly recruited to sites of DNA damage. As part of the SIN3B complex represses transcription and counteracts the histone acetyltransferase activity of EP300 through the recognition H3K27ac marks by PHF12 and the activity of the histone deacetylase HDAC2. SIN3B complex is recruited downstream of the constitutively active genes transcriptional start sites through interaction with histones and mitigates histone acetylation and RNA polymerase II progression within transcribed regions contributing to the regulation of transcription. Required for homologous recombination repair (HRR) and resistance to mitomycin C (MMC). Involved in the localization of PALB2, BRCA2 and RAD51, but not BRCA1, to DNA-damage foci. This chain is Mortality factor 4-like protein 1 (MORF4L1), found in Pongo abelii (Sumatran orangutan).